Consider the following 78-residue polypeptide: Putative DNA-binding protein MT0521 (78 aa).

A DNA-binding region (H-T-H motif) is located at residues 24–45 (LLTVAEVAALMRVSKMTVYRLV).

This is Putative DNA-binding protein MT0521 from Mycobacterium tuberculosis (strain CDC 1551 / Oshkosh).